Consider the following 1412-residue polypeptide: uncharacterized protein (1412 aa).

The segment at 1–22 (MESINVVNSVEDLPGFNPDENV) is disordered. Coiled-coil stretches lie at residues 317-377 (NNDF…ILRH) and 732-800 (SKEA…SDDE). The segment at 778 to 808 (SRKRKHEDIVKEHEAEKRDSDDEDDFEEVDV) is disordered. Residues 783-797 (HEDIVKEHEAEKRDS) show a composition bias toward basic and acidic residues. Positions 798–808 (DDEDDFEEVDV) are enriched in acidic residues.

This is an uncharacterized protein from Magallana gigas (Pacific oyster).